We begin with the raw amino-acid sequence, 923 residues long: Neuropilin-1 (923 aa).

Positions 1-21 (MERGLPLLCAVLALVLAPAGA) are cleaved as a signal peptide. Residues 22–856 (FRNDKCGDTI…PGNVLKTLDP (835 aa)) lie on the Extracellular side of the membrane. 3 cysteine pairs are disulfide-bonded: C27/C54, C82/C104, and C147/C173. CUB domains are found at residues 27–141 (CGDT…YEIF) and 147–265 (CSQN…YSVL). N-linked (GlcNAc...) asparagine glycosylation is present at N150. Residues E195, D209, and D250 each coordinate Ca(2+). Residues C206 and C228 are joined by a disulfide bond. N-linked (GlcNAc...) asparagine glycosylation is found at N261, N300, and N522. 2 cysteine pairs are disulfide-bonded: C275-C424 and C431-C583. F5/8 type C domains are found at residues 275 to 424 (CMEA…VYGC) and 431 to 583 (CSGM…LLGC). S612 carries O-linked (Xyl...) (chondroitin sulfate) serine; alternate glycosylation. S612 carries an O-linked (Xyl...) (heparan sulfate) serine; alternate glycan. The MAM domain occupies 645 to 811 (TYGFNCEFGW…NHISQEDCAK (167 aa)). The interval 820 to 845 (PEIKIDETGSTPGYEGEGEGDKNISR) is disordered. O-linked (Xyl...) (chondroitin sulfate) serine glycosylation is present at S829. N842 carries an N-linked (GlcNAc...) asparagine glycan. A helical membrane pass occupies residues 857–879 (ILITIIAMSALGVLLGAVCGVVL). Residues 880–923 (YCACWHNGMSERNLSALENYNFELVDGVKLKKDKLNTQSTYSEA) lie on the Cytoplasmic side of the membrane. Phosphoserine is present on S894.

Belongs to the neuropilin family. Homodimer, and heterodimer with NRP2. Interacts with FER. Interacts with PLXNB1. Interacts with VEGFA. Interacts with ABCB8/MITOSUR in mitochondria. In terms of assembly, (Microbial infection) Interacts with SARS coronavirus-2/SARS-CoV-2 spike protein S1 (via the CendR motif RRAR). As to expression, the expression of isoforms 1 and 2 does not seem to overlap. Expressed in olfactory epithelium (at protein level). Expressed in fibroblasts (at protein level). Expressed by the blood vessels of different tissues. In the developing embryo it is found predominantly in the nervous system. In adult tissues, it is highly expressed in heart and placenta; moderately in lung, liver, skeletal muscle, kidney and pancreas; and low in adult brain. Expressed in the central nervous system, including olfactory related regions such as the olfactory tubercles and paraolfactory gyri. The expression of isoforms 1 and 2 does not seem to overlap. Found in liver hepatocytes, kidney distal and proximal tubules.

It localises to the secreted. Its subcellular location is the mitochondrion membrane. The protein localises to the cell membrane. The protein resides in the cytoplasm. Its function is as follows. Cell-surface receptor involved in the development of the cardiovascular system, in angiogenesis, in the formation of certain neuronal circuits and in organogenesis outside the nervous system. Mediates the chemorepulsant activity of semaphorins. Recognizes a C-end rule (CendR) motif R/KXXR/K on its ligands which causes cellular internalization and vascular leakage. It binds to semaphorin 3A, the PLGF-2 isoform of PGF, the VEGF165 isoform of VEGFA and VEGFB. Coexpression with KDR results in increased VEGF165 binding to KDR as well as increased chemotaxis. Regulates VEGF-induced angiogenesis. Binding to VEGFA initiates a signaling pathway needed for motor neuron axon guidance and cell body migration, including for the caudal migration of facial motor neurons from rhombomere 4 to rhombomere 6 during embryonic development. Regulates mitochondrial iron transport via interaction with ABCB8/MITOSUR. Functionally, (Microbial infection) Acts as a host factor for human coronavirus SARS-CoV-2 infection. Recognizes and binds to CendR motif RRAR on SARS-CoV-2 spike protein S1 which enhances SARS-CoV-2 infection. Binds VEGF-165 and may inhibit its binding to cells. May induce apoptosis by sequestering VEGF-165. May bind as well various members of the semaphorin family. Its expression has an averse effect on blood vessel number and integrity. The sequence is that of Neuropilin-1 from Homo sapiens (Human).